We begin with the raw amino-acid sequence, 649 residues long: Acetylcholinesterase (649 aa).

Positions Met-1 to Gly-38 are cleaved as a signal peptide. The cysteines at positions 104 and 131 are disulfide-linked. N-linked (GlcNAc...) asparagine glycans are attached at residues Asn-126 and Asn-174. Ser-276 acts as the Acyl-ester intermediate in catalysis. Cys-330 and Cys-345 form a disulfide bridge. N-linked (GlcNAc...) asparagine glycosylation occurs at Asn-331. Residues Glu-405 and His-518 each act as charge relay system in the active site. Cys-480 and Cys-598 are joined by a disulfide. Asn-531 carries an N-linked (GlcNAc...) asparagine glycan. Ser-619 carries GPI-anchor amidated serine lipidation. Residues Gly-620–Phe-649 constitute a propeptide, removed in mature form.

The protein belongs to the type-B carboxylesterase/lipase family. In terms of assembly, homodimer; disulfide-linked. The active unit is formed by non-covalent association of the 55 kDa and 16 kDa subunits. Post-translationally, proteolytic cleavage into the 16 kDa subunit and the 55 kDa subunits originates from the hydrophilic peptide, aa 148-180, and is associated with excretion out of the cell. Neither N-glycosylation nor dimerization is required for enzyme activity or substrate specificity, but protects the protein against proteolytic digestion.

It localises to the synapse. The protein resides in the cell membrane. It catalyses the reaction acetylcholine + H2O = choline + acetate + H(+). Its function is as follows. Rapidly hydrolyzes choline released into the synapse. It can hydrolyze butyrylthiocholine. This chain is Acetylcholinesterase (Ace), found in Drosophila melanogaster (Fruit fly).